A 1694-amino-acid polypeptide reads, in one-letter code: Methyltransferase/helicase/RNA-directed RNA polymerase (1694 aa).

The region spanning 194 to 444 (KFTQNVDGPH…HDWEVYSKYL (251 aa)) is the Alphavirus-like MT domain. One can recognise a (+)RNA virus helicase ATP-binding domain in the interval 829-983 (DGTRVTTNLK…VGLNFDREIR (155 aa)). Residues 984-1145 (STTYRCPQDI…DLTQEASGSE (162 aa)) enclose the (+)RNA virus helicase C-terminal domain. Residues 1442–1558 (NTFTEIDFSK…CSYGPIQVPL (117 aa)) enclose the RdRp catalytic domain.

Belongs to the ssRNA positive-strand viruses RNA-directed RNA polymerase family.

It catalyses the reaction ATP + H2O = ADP + phosphate + H(+). It carries out the reaction RNA(n) + a ribonucleoside 5'-triphosphate = RNA(n+1) + diphosphate. Its function is as follows. RNA-dependent RNA polymerase replicates the viral genome. The protein is Methyltransferase/helicase/RNA-directed RNA polymerase of Rubus idaeus (Raspberry).